The primary structure comprises 193 residues: Rho-related GTP-binding protein RhoA-D (193 aa).

GTP contacts are provided by residues 12–19 (GDGACGKT), 30–37 (FPEVYVPT), 59–63 (DTAGQ), 117–120 (NKKD), and 160–162 (SAK). A glycan ((Microbial infection) O-linked (GlcNAc) tyrosine; by Yersinia Afp18) is linked at Tyr34. Cys190 carries the cysteine methyl ester modification. The S-geranylgeranyl cysteine moiety is linked to residue Cys190. Residues 191–193 (LLL) constitute a propeptide, removed in mature form.

This sequence belongs to the small GTPase superfamily. Rho family. In terms of processing, (Microbial infection) Glycosylated at Tyr-34 by Yersinia ruckeri toxin Afp18. Mono-O-GlcNAcylation by Afp18 inhibits RhoA activation by guanine nucleotide exchange factors and blocks RhoA signaling.

The protein resides in the cell membrane. Its function is as follows. Regulates a signal transduction pathway linking plasma membrane receptors to the assembly of focal adhesions and actin stress fibers. In Danio rerio (Zebrafish), this protein is Rho-related GTP-binding protein RhoA-D.